Here is a 122-residue protein sequence, read N- to C-terminus: Large ribosomal subunit protein uL14 (122 aa).

The protein belongs to the universal ribosomal protein uL14 family. In terms of assembly, part of the 50S ribosomal subunit. Forms a cluster with proteins L3 and L19. In the 70S ribosome, L14 and L19 interact and together make contacts with the 16S rRNA in bridges B5 and B8.

In terms of biological role, binds to 23S rRNA. Forms part of two intersubunit bridges in the 70S ribosome. This chain is Large ribosomal subunit protein uL14, found in Acidovorax sp. (strain JS42).